We begin with the raw amino-acid sequence, 903 residues long: KAT8 regulatory NSL complex subunit 1-like protein (903 aa).

Disordered regions lie at residues 319 to 343, 419 to 441, and 652 to 676; these read DSDA…DECN, MPKS…PSSP, and TECT…HRSE. Polar residues-rich tracts occupy residues 423–441 and 652–661; these read PQGT…PSSP and TECTSSYSPD. A PEHE domain is found at 748 to 862; sequence EIITPSWKEV…ESPKGKTIHW (115 aa).

In Xenopus tropicalis (Western clawed frog), this protein is KAT8 regulatory NSL complex subunit 1-like protein (kansl1l).